Consider the following 296-residue polypeptide: Putative S-adenosyl-L-methionine-dependent methyltransferase MAV_4764 (296 aa).

S-adenosyl-L-methionine-binding positions include D121 and 150 to 151; that span reads DL.

Belongs to the UPF0677 family.

Its function is as follows. Exhibits S-adenosyl-L-methionine-dependent methyltransferase activity. This Mycobacterium avium (strain 104) protein is Putative S-adenosyl-L-methionine-dependent methyltransferase MAV_4764.